We begin with the raw amino-acid sequence, 305 residues long: Short-chain dehydrogenase/reductase VdtF (305 aa).

NADP(+)-binding residues include leucine 28 and asparagine 98. The Proton donor role is filled by serine 192. Residues tyrosine 206, lysine 210, and threonine 241 each contribute to the NADP(+) site. Tyrosine 206 serves as the catalytic Proton acceptor. The active-site Lowers pKa of active site Tyr is lysine 210.

The protein belongs to the short-chain dehydrogenases/reductases (SDR) family.

The catalysed reaction is methyl 2-[(3S)-9,10-dihydroxy-7-methoxy-1-oxo-1H,3H,4H-naphtho[2,3-c]pyran-3-yl]acetate + AH2 = semiviriditoxin + A. It catalyses the reaction 9,10-dihydroxy-7-methoxy-3-(2-oxopropyl)-1H-benzo[g]isochromen-1-one + AH2 = (3S)-9,10-dihydroxy-7-methoxy-3-(2-oxopropyl)-1H,3H,4H-naphtho[2,3-c]pyran-1-one + A. It participates in secondary metabolite biosynthesis. Functionally, short-chain dehydrogenase/reductase; part of the gene cluster that mediates the biosynthesis of viriditoxin, one of the 'classical' secondary metabolites produced by fungi and that has antibacterial activity. The first step is performed by the polyketide synthase VdtA which condenses one acetyl-CoA and 6 malonyl-CoA units to form the heptaketide monomer backbone of viriditoxin. The product of VdtA is then O-methylated on C7 by the O-methyltransferase VdtC. The O-methyl group is important for the stereoselective coupling of the monomers at the final step of viriditoxin biosynthesis. The short-chain dehydrogenase/reductase VdtF then acts as a stereospecific reductase converting the pyrone to dihydropyrone via the reduction of the C3-C4 double bond. The FAD-binding monooxygenase VdtE then converts the ketone group into a methyl-ester group to yield semi-viriditoxin. Finally, the laccase VdtB is involved in dimerization of 2 semi-viriditoxin molecules to yield the final viriditoxin. VdtB is responsible for the regioselective 6,6'-coupling of semi-viriditoxin, which yields (M)-viriditoxin and (P)-viriditoxin at a ratio of 1:2. The non-catalytic carboxylesterase-like protein VdtD affects the stereochemistical outcome of the coupling. The highly reducing polyketide synthase VdtX is not involved in viriditoxin synthesis, but might possibly play a role in the production of additional metabolites not identified yet. This is Short-chain dehydrogenase/reductase VdtF from Byssochlamys spectabilis (Paecilomyces variotii).